Reading from the N-terminus, the 935-residue chain is Protocadherin gamma-A11 (935 aa).

Residues 1–29 form the signal peptide; that stretch reads MANRLQRGDRSRLLLLLCIFLGTLRGFRA. Cadherin domains follow at residues 30-134, 135-243, 244-348, 349-453, 454-563, and 571-677; these read RQIR…APSF, QEDE…IPMF, TQSV…APEI, TITS…PPVF, PHSS…APEI, and DGST…ADLG. The Extracellular segment spans residues 30-693; it reads RQIRYSVPEE…NSEASDLSLY (664 aa). N48 carries N-linked (GlcNAc...) asparagine glycosylation. N255, N266, N420, and N546 each carry an N-linked (GlcNAc...) asparagine glycan. The chain crosses the membrane as a helical span at residues 694–714; that stretch reads LVVAVAAVSCIFLVFVIVLLA. Residues 715–935 are Cytoplasmic-facing; the sequence is LRLWRWHKSR…KKKSGKKEKK (221 aa). Disordered regions lie at residues 805 to 844 and 905 to 935; these read CDPT…WPNN and ATLT…KEKK. Positions 807–844 are enriched in polar residues; sequence PTSNQQAPPNTDWRFSQAQRPGTSGSQNGDDTGTWPNN. The segment covering 925–935 has biased composition (basic residues); it reads NKKKSGKKEKK.

The protein resides in the cell membrane. Potential calcium-dependent cell-adhesion protein. May be involved in the establishment and maintenance of specific neuronal connections in the brain. This chain is Protocadherin gamma-A11 (PCDHGA11), found in Pan troglodytes (Chimpanzee).